Reading from the N-terminus, the 120-residue chain is Dynein 11 kDa light chain, flagellar outer arm (120 aa).

It belongs to the dynein light chain family. In terms of assembly, consists of at least 3 heavy chains (alpha, beta and gamma), 2 intermediate chains and 8 light chains.

It is found in the cytoplasm. The protein localises to the cytoskeleton. Its subcellular location is the flagellum axoneme. The chain is Dynein 11 kDa light chain, flagellar outer arm from Chlamydomonas reinhardtii (Chlamydomonas smithii).